A 156-amino-acid chain; its full sequence is Small ribosomal subunit protein uS7 (156 aa).

It belongs to the universal ribosomal protein uS7 family. In terms of assembly, part of the 30S ribosomal subunit. Contacts proteins S9 and S11.

Its function is as follows. One of the primary rRNA binding proteins, it binds directly to 16S rRNA where it nucleates assembly of the head domain of the 30S subunit. Is located at the subunit interface close to the decoding center, probably blocks exit of the E-site tRNA. The chain is Small ribosomal subunit protein uS7 from Arthrobacter sp. (strain FB24).